We begin with the raw amino-acid sequence, 868 residues long: Leucine--tRNA ligase (868 aa).

Residues 42–52 carry the 'HIGH' region motif; sequence PYPSGKLHMGH. The short motif at 624 to 628 is the 'KMSKS' region element; it reads TMSKS. Lys-627 is a binding site for ATP.

This sequence belongs to the class-I aminoacyl-tRNA synthetase family.

The protein resides in the cytoplasm. It catalyses the reaction tRNA(Leu) + L-leucine + ATP = L-leucyl-tRNA(Leu) + AMP + diphosphate. The chain is Leucine--tRNA ligase from Nitrosomonas eutropha (strain DSM 101675 / C91 / Nm57).